The primary structure comprises 648 residues: Threonine--tRNA ligase (648 aa).

Positions 1–61 constitute a TGS domain; sequence MIKITLPDGS…TTDGSLVLYT (61 aa). The interval 240–539 is catalytic; the sequence is DHRKLGKELE…LLEHTAGNFP (300 aa). Zn(2+) contacts are provided by cysteine 335, histidine 386, and histidine 516.

The protein belongs to the class-II aminoacyl-tRNA synthetase family. In terms of assembly, homodimer. It depends on Zn(2+) as a cofactor.

It is found in the cytoplasm. It carries out the reaction tRNA(Thr) + L-threonine + ATP = L-threonyl-tRNA(Thr) + AMP + diphosphate + H(+). Catalyzes the attachment of threonine to tRNA(Thr) in a two-step reaction: L-threonine is first activated by ATP to form Thr-AMP and then transferred to the acceptor end of tRNA(Thr). Also edits incorrectly charged L-seryl-tRNA(Thr). In Flavobacterium psychrophilum (strain ATCC 49511 / DSM 21280 / CIP 103535 / JIP02/86), this protein is Threonine--tRNA ligase.